We begin with the raw amino-acid sequence, 450 residues long: Glucose-6-phosphate isomerase (450 aa).

Position 39 is a phosphothreonine (T39). Catalysis depends on E291, which acts as the Proton donor. Catalysis depends on residues H312 and K426.

It belongs to the GPI family.

Its subcellular location is the cytoplasm. It carries out the reaction alpha-D-glucose 6-phosphate = beta-D-fructose 6-phosphate. It functions in the pathway carbohydrate biosynthesis; gluconeogenesis. The protein operates within carbohydrate degradation; glycolysis; D-glyceraldehyde 3-phosphate and glycerone phosphate from D-glucose: step 2/4. Catalyzes the reversible isomerization of glucose-6-phosphate to fructose-6-phosphate. The chain is Glucose-6-phosphate isomerase from Bacillus cytotoxicus (strain DSM 22905 / CIP 110041 / 391-98 / NVH 391-98).